The chain runs to 354 residues: Chorismate synthase (354 aa).

Arginine 48 contacts NADP(+). Residues arginine 125–serine 127, asparagine 239–alanine 240, glycine 280, lysine 295–threonine 299, and arginine 321 contribute to the FMN site.

This sequence belongs to the chorismate synthase family. Homotetramer. FMNH2 is required as a cofactor.

The catalysed reaction is 5-O-(1-carboxyvinyl)-3-phosphoshikimate = chorismate + phosphate. It functions in the pathway metabolic intermediate biosynthesis; chorismate biosynthesis; chorismate from D-erythrose 4-phosphate and phosphoenolpyruvate: step 7/7. Its function is as follows. Catalyzes the anti-1,4-elimination of the C-3 phosphate and the C-6 proR hydrogen from 5-enolpyruvylshikimate-3-phosphate (EPSP) to yield chorismate, which is the branch point compound that serves as the starting substrate for the three terminal pathways of aromatic amino acid biosynthesis. This reaction introduces a second double bond into the aromatic ring system. The polypeptide is Chorismate synthase (Christiangramia forsetii (strain DSM 17595 / CGMCC 1.15422 / KT0803) (Gramella forsetii)).